Consider the following 364-residue polypeptide: GDP-fucose transporter 1 (364 aa).

Transmembrane regions (helical) follow at residues 34–56, 76–98, 111–130, 140–162, 167–185, 195–214, 227–249, and 264–286; these read FVLR…ISMV, VTFY…ATCC, LKVA…MITF, VAFY…YLLL, SFYA…WLGV, SWTG…LNAI, IWRL…LLAL, and AHFW…VTGL. Residues 345–364 form a disordered region; sequence MKKTQEEPHPRENEKSNMEV.

This sequence belongs to the TPT transporter family. SLC35C subfamily.

The protein localises to the golgi apparatus membrane. The enzyme catalyses GMP(out) + GDP-beta-L-fucose(in) = GMP(in) + GDP-beta-L-fucose(out). Its function is as follows. Antiporter specific for GDP-l-fucose and depending on the concomitant reverse transport of GMP. Involved in GDP-fucose import from the cytoplasm into the Golgi lumen. This is GDP-fucose transporter 1 (SLC35C1) from Bos taurus (Bovine).